The primary structure comprises 1143 residues: Disease resistance protein Pikm1-TS (1143 aa).

The segment at 1–190 is structured coiled coil (CC) domain; the sequence is MEAAAMAVTA…PLRIMGGEMQ (190 aa). Positions 189-258 constitute an HMA domain; the sequence is MQKIVFKIPM…KVGPAMFLEV (70 aa). Positions 191-264 are HMA-like domain; the sequence is KIVFKIPMVD…FLEVSQVKED (74 aa). Positions 282–570 constitute an NB-ARC domain; it reads HEVKTICILG…WIAEGFVSEE (289 aa). 10 LRR repeats span residues 681–706, 708–731, 732–754, 756–777, 778–800, 802–823, 824–848, 945–968, 979–1002, and 1004–1027; these read FKRLRVLDLEDNKDIQDSHLQGICEQ, SLRVRYLGLKGTRIRKLPQEMRKL, KHLEILYVGSTRISELPQEIGEL, HLRILDVRNTDITELPLQIREL, QHLHTLDVRNTPISELPPQVGKL, NLKIMCVRSTGVRELPKEIGEL, NHLQTLDVRNTRVRELPWQAGQISQ, MPNLQTLVLRFEALPRQPITINGT, DSRVPRIAFHEDAMPNLKLLEFKF, and AGPASNDAIGITNLKSLQKVVFRC.

Belongs to the disease resistance NB-LRR family. As to quaternary structure, interacts with AVR-Pik through its N-terminal part containing the HMA-like domain. As to expression, constitutively expressed.

Its function is as follows. Disease resistance (R) protein that specifically recognizes the AVR-Pik effector avirulence protein from M.oryzae. Resistance proteins guard the plant against pathogens that contain an appropriate avirulence protein via an indirect interaction with this avirulence protein. That triggers a defense system including the hypersensitive response, which restricts the pathogen growth. Contribution of Pikm-2 is required to recognize the effector avirulence protein AVR-Pik. The chain is Disease resistance protein Pikm1-TS from Oryza sativa subsp. japonica (Rice).